A 440-amino-acid chain; its full sequence is Golgi reassembly-stacking protein 1 (440 aa).

Gly2 carries the N-myristoyl glycine lipid modification. PDZ GRASP-type domains are found at residues 15-105 (EGFH…FCSF) and 111-199 (QVWH…YGYL). Residues 15–215 (EGFHLHGVQE…PPSYHKKPPG (201 aa)) are GRASP. The Zn(2+) site is built by His18, His20, and Cys103. Residues 190 to 202 (LGCGIGYGYLHRI) form an essential for interaction with GOLGA2/GM130 region. 3 disordered regions span residues 205 to 248 (QPPS…ETGS), 261 to 301 (PGSS…PVQR), and 327 to 440 (LPSS…STTE). A compositionally biased stretch (pro residues) spans 214–239 (PGTPPPSALPLGAPPPDALPPGPTPE). A Phosphothreonine modification is found at Thr216. Over residues 327 to 336 (LPSSTELTTT) the composition is skewed to low complexity. Residues 337 to 351 (AVSTSGPEDICSSSS) show a composition bias toward polar residues. Ser362, Ser364, and Ser373 each carry phosphoserine.

This sequence belongs to the GORASP family. As to quaternary structure, homodimer. Forms higher-order oligomers under interphase but not mitotic conditions. Dimers of the protein on one membrane might be able to interact with dimers on another and so stack cisternae. Interacts with the C-terminus of GOLGA2/GM130 under both mitotic and non-mitotic conditions. The interaction is critical for the correct targeting of both proteins to the cis-Golgi. Interacts with TMED2 and TMED3. Post-translationally, phosphorylated by CDC2/B1 and PLK kinases during mitosis. Phosphorylation cycle correlates with the cisternal stacking cycle. Phosphorylation of the homodimer prevents the association of dimers into higher-order oligomers, leading to cisternal unstacking. In terms of processing, target for caspase-3 cleavage during apoptosis. The cleavage contributes to Golgi fragmentation and occurs very early in the execution phase of apoptosis. Myristoylated.

It localises to the golgi apparatus. The protein resides in the cis-Golgi network membrane. Its subcellular location is the endoplasmic reticulum-Golgi intermediate compartment membrane. Functionally, key structural protein of the Golgi apparatus. The membrane cisternae of the Golgi apparatus adhere to each other to form stacks, which are aligned side by side to form the Golgi ribbon. Acting in concert with GORASP2/GRASP55, is required for the formation and maintenance of the Golgi ribbon, and may be dispensable for the formation of stacks. However, other studies suggest that GORASP1 plays an important role in assembly and membrane stacking of the cisternae, and in the reassembly of Golgi stacks after breakdown during mitosis. Caspase-mediated cleavage of GORASP1 is required for fragmentation of the Golgi during apoptosis. Also mediates, via its interaction with GOLGA2/GM130, the docking of transport vesicles with the Golgi membranes. Mediates ER stress-induced unconventional (ER/Golgi-independent) trafficking of core-glycosylated CFTR to cell membrane. The sequence is that of Golgi reassembly-stacking protein 1 (GORASP1) from Homo sapiens (Human).